The sequence spans 354 residues: Ferrochelatase (354 aa).

Fe cation is bound by residues His-204 and Glu-306.

It belongs to the ferrochelatase family.

The protein resides in the cytoplasm. The catalysed reaction is heme b + 2 H(+) = protoporphyrin IX + Fe(2+). It participates in porphyrin-containing compound metabolism; protoheme biosynthesis; protoheme from protoporphyrin-IX: step 1/1. In terms of biological role, catalyzes the ferrous insertion into protoporphyrin IX. This is Ferrochelatase from Coxiella burnetii (strain Dugway 5J108-111).